A 509-amino-acid chain; its full sequence is GMP synthase [glutamine-hydrolyzing] (509 aa).

In terms of domain architecture, Glutamine amidotransferase type-1 spans 4–194 (LVLVVDFGGQ…LYNICGLENS (191 aa)). Cys81 functions as the Nucleophile in the catalytic mechanism. Catalysis depends on residues His168 and Glu170. The GMPS ATP-PPase domain occupies 195 to 384 (WSMASFAEEK…LGIPHHLVWR (190 aa)). 222 to 228 (SGGVDSS) is an ATP binding site.

As to quaternary structure, homodimer.

It carries out the reaction XMP + L-glutamine + ATP + H2O = GMP + L-glutamate + AMP + diphosphate + 2 H(+). The protein operates within purine metabolism; GMP biosynthesis; GMP from XMP (L-Gln route): step 1/1. Functionally, catalyzes the synthesis of GMP from XMP. The sequence is that of GMP synthase [glutamine-hydrolyzing] from Clostridium perfringens (strain 13 / Type A).